The following is a 210-amino-acid chain: ATP-dependent Clp protease proteolytic subunit (210 aa).

The Nucleophile role is filled by serine 106. The active site involves histidine 131.

The protein belongs to the peptidase S14 family. Fourteen ClpP subunits assemble into 2 heptameric rings which stack back to back to give a disk-like structure with a central cavity, resembling the structure of eukaryotic proteasomes.

It localises to the cytoplasm. It carries out the reaction Hydrolysis of proteins to small peptides in the presence of ATP and magnesium. alpha-casein is the usual test substrate. In the absence of ATP, only oligopeptides shorter than five residues are hydrolyzed (such as succinyl-Leu-Tyr-|-NHMec, and Leu-Tyr-Leu-|-Tyr-Trp, in which cleavage of the -Tyr-|-Leu- and -Tyr-|-Trp bonds also occurs).. Its function is as follows. Cleaves peptides in various proteins in a process that requires ATP hydrolysis. Has a chymotrypsin-like activity. Plays a major role in the degradation of misfolded proteins. The chain is ATP-dependent Clp protease proteolytic subunit from Azospirillum brasilense.